A 200-amino-acid polypeptide reads, in one-letter code: Nucleoside triphosphate pyrophosphatase (200 aa).

The active-site Proton acceptor is the D75.

Belongs to the Maf family. Requires a divalent metal cation as cofactor.

The protein resides in the cytoplasm. The enzyme catalyses a ribonucleoside 5'-triphosphate + H2O = a ribonucleoside 5'-phosphate + diphosphate + H(+). It carries out the reaction a 2'-deoxyribonucleoside 5'-triphosphate + H2O = a 2'-deoxyribonucleoside 5'-phosphate + diphosphate + H(+). Functionally, nucleoside triphosphate pyrophosphatase. May have a dual role in cell division arrest and in preventing the incorporation of modified nucleotides into cellular nucleic acids. The polypeptide is Nucleoside triphosphate pyrophosphatase (Synechococcus sp. (strain CC9311)).